The sequence spans 269 residues: [LysW]-aminoadipate kinase (269 aa).

5-8 contacts ATP; that stretch reads KVGG. Arg-64 is a binding site for substrate. Tyr-78 contacts ATP. Residue Asn-168 coordinates substrate.

Belongs to the acetylglutamate kinase family. LysZ subfamily.

It is found in the cytoplasm. The catalysed reaction is [amino-group carrier protein]-C-terminal-N-(1,4-dicarboxybutan-1-yl)-L-glutamine + ATP = [amino-group carrier protein]-C-terminal-N-(1-carboxy-5-phosphooxy-5-oxopentan-1-yl)-L-glutamine + ADP. Its pathway is amino-acid biosynthesis; L-lysine biosynthesis via AAA pathway; L-lysine from L-alpha-aminoadipate (Thermus route): step 2/5. Catalyzes the phosphorylation of LysW-gamma-alpha-aminoadipate. Does not phosphorylate N-acetyl-glutamate. This is [LysW]-aminoadipate kinase from Thermus thermophilus (strain ATCC BAA-163 / DSM 7039 / HB27).